A 176-amino-acid chain; its full sequence is MLAESVLGNLKEGGSSKELDFIDLEWFDAQKRMGRFTSQKGAELVLKLKNPPKMGLCDGDILFEDATSLIAINIIPTPTLHVYADSTAQVARLCYEVGNRHASLYYGDSPLSFKTPFERPLQVLFDKLALRYEVLKSKLDASQRISVSAPHADPLQEGSAPLKFKSALDLQIVIKK.

The protein belongs to the UreE family.

It is found in the cytoplasm. Involved in urease metallocenter assembly. Binds nickel. Probably functions as a nickel donor during metallocenter assembly. The sequence is that of Urease accessory protein UreE from Helicobacter bizzozeronii.